An 884-amino-acid chain; its full sequence is Alanine--tRNA ligase (884 aa).

Positions 572, 576, 673, and 677 each coordinate Zn(2+).

It belongs to the class-II aminoacyl-tRNA synthetase family. The cofactor is Zn(2+).

The protein resides in the cytoplasm. The catalysed reaction is tRNA(Ala) + L-alanine + ATP = L-alanyl-tRNA(Ala) + AMP + diphosphate. Catalyzes the attachment of alanine to tRNA(Ala) in a two-step reaction: alanine is first activated by ATP to form Ala-AMP and then transferred to the acceptor end of tRNA(Ala). Also edits incorrectly charged Ser-tRNA(Ala) and Gly-tRNA(Ala) via its editing domain. The polypeptide is Alanine--tRNA ligase (Xylella fastidiosa (strain M23)).